The chain runs to 236 residues: Biosynthetic peptidoglycan transglycosylase (236 aa).

The chain crosses the membrane as a helical span at residues 20–40; that stretch reads LVFIVLSVLILPYALIGLYLL.

It belongs to the glycosyltransferase 51 family.

The protein resides in the cell inner membrane. It catalyses the reaction [GlcNAc-(1-&gt;4)-Mur2Ac(oyl-L-Ala-gamma-D-Glu-L-Lys-D-Ala-D-Ala)](n)-di-trans,octa-cis-undecaprenyl diphosphate + beta-D-GlcNAc-(1-&gt;4)-Mur2Ac(oyl-L-Ala-gamma-D-Glu-L-Lys-D-Ala-D-Ala)-di-trans,octa-cis-undecaprenyl diphosphate = [GlcNAc-(1-&gt;4)-Mur2Ac(oyl-L-Ala-gamma-D-Glu-L-Lys-D-Ala-D-Ala)](n+1)-di-trans,octa-cis-undecaprenyl diphosphate + di-trans,octa-cis-undecaprenyl diphosphate + H(+). It participates in cell wall biogenesis; peptidoglycan biosynthesis. Functionally, peptidoglycan polymerase that catalyzes glycan chain elongation from lipid-linked precursors. The polypeptide is Biosynthetic peptidoglycan transglycosylase (Rhizobium meliloti (strain 1021) (Ensifer meliloti)).